The sequence spans 299 residues: ATP phosphoribosyltransferase (299 aa).

Belongs to the ATP phosphoribosyltransferase family. Long subfamily. As to quaternary structure, equilibrium between an active dimeric form, an inactive hexameric form and higher aggregates. Interconversion between the various forms is largely reversible and is influenced by the natural substrates and inhibitors of the enzyme. Mg(2+) serves as cofactor.

It is found in the cytoplasm. It catalyses the reaction 1-(5-phospho-beta-D-ribosyl)-ATP + diphosphate = 5-phospho-alpha-D-ribose 1-diphosphate + ATP. Its pathway is amino-acid biosynthesis; L-histidine biosynthesis; L-histidine from 5-phospho-alpha-D-ribose 1-diphosphate: step 1/9. With respect to regulation, feedback inhibited by histidine. Catalyzes the condensation of ATP and 5-phosphoribose 1-diphosphate to form N'-(5'-phosphoribosyl)-ATP (PR-ATP). Has a crucial role in the pathway because the rate of histidine biosynthesis seems to be controlled primarily by regulation of HisG enzymatic activity. The polypeptide is ATP phosphoribosyltransferase (Blochmanniella floridana).